Reading from the N-terminus, the 165-residue chain is Phosphopantetheine adenylyltransferase (165 aa).

It belongs to the eukaryotic CoaD family.

The protein localises to the cytoplasm. The enzyme catalyses (R)-4'-phosphopantetheine + ATP + H(+) = 3'-dephospho-CoA + diphosphate. The protein operates within cofactor biosynthesis; coenzyme A biosynthesis. Reversibly transfers an adenylyl group from ATP to 4'-phosphopantetheine, yielding dephospho-CoA (dPCoA) and pyrophosphate. The chain is Phosphopantetheine adenylyltransferase from Thermococcus kodakarensis (strain ATCC BAA-918 / JCM 12380 / KOD1) (Pyrococcus kodakaraensis (strain KOD1)).